The primary structure comprises 522 residues: Bifunctional purine biosynthesis protein PurH (522 aa).

One can recognise an MGS-like domain in the interval 1-145 (MKPIARALIS…KNHAAVTVIV (145 aa)).

The protein belongs to the PurH family.

It carries out the reaction (6R)-10-formyltetrahydrofolate + 5-amino-1-(5-phospho-beta-D-ribosyl)imidazole-4-carboxamide = 5-formamido-1-(5-phospho-D-ribosyl)imidazole-4-carboxamide + (6S)-5,6,7,8-tetrahydrofolate. The enzyme catalyses IMP + H2O = 5-formamido-1-(5-phospho-D-ribosyl)imidazole-4-carboxamide. It participates in purine metabolism; IMP biosynthesis via de novo pathway; 5-formamido-1-(5-phospho-D-ribosyl)imidazole-4-carboxamide from 5-amino-1-(5-phospho-D-ribosyl)imidazole-4-carboxamide (10-formyl THF route): step 1/1. It functions in the pathway purine metabolism; IMP biosynthesis via de novo pathway; IMP from 5-formamido-1-(5-phospho-D-ribosyl)imidazole-4-carboxamide: step 1/1. This chain is Bifunctional purine biosynthesis protein PurH, found in Nitrosococcus oceani (strain ATCC 19707 / BCRC 17464 / JCM 30415 / NCIMB 11848 / C-107).